The primary structure comprises 188 residues: Elongation factor P (188 aa).

An N6-(3,6-diaminohexanoyl)-5-hydroxylysine modification is found at Lys-34.

It belongs to the elongation factor P family. May be beta-lysylated on the epsilon-amino group of Lys-34 by the combined action of EpmA and EpmB, and then hydroxylated on the C5 position of the same residue by EpmC (if this protein is present). Lysylation is critical for the stimulatory effect of EF-P on peptide-bond formation. The lysylation moiety may extend toward the peptidyltransferase center and stabilize the terminal 3-CCA end of the tRNA. Hydroxylation of the C5 position on Lys-34 may allow additional potential stabilizing hydrogen-bond interactions with the P-tRNA.

It localises to the cytoplasm. The protein operates within protein biosynthesis; polypeptide chain elongation. Its function is as follows. Involved in peptide bond synthesis. Alleviates ribosome stalling that occurs when 3 or more consecutive Pro residues or the sequence PPG is present in a protein, possibly by augmenting the peptidyl transferase activity of the ribosome. Modification of Lys-34 is required for alleviation. The sequence is that of Elongation factor P from Histophilus somni (strain 129Pt) (Haemophilus somnus).